A 328-amino-acid polypeptide reads, in one-letter code: Peroxidase 71 (328 aa).

Residues 1-23 form the signal peptide; sequence MGLVRSLCLLITFLNCLIISVHG. 4 disulfide bridges follow: C44–C120, C77–C82, C126–C324, and C204–C235. Residue H75 is the Proton acceptor of the active site. Residues D76, V79, G81, D83, and S85 each contribute to the Ca(2+) site. P167 provides a ligand contact to substrate. H197 is a binding site for heme b. T198 provides a ligand contact to Ca(2+). A glycan (N-linked (GlcNAc...) asparagine) is linked at N213. Residues D248, S251, and D256 each coordinate Ca(2+). N262 is a glycosylation site (N-linked (GlcNAc...) asparagine).

It belongs to the peroxidase family. Classical plant (class III) peroxidase subfamily. Requires heme b as cofactor. It depends on Ca(2+) as a cofactor. As to expression, slightly expressed in roots.

It localises to the secreted. It catalyses the reaction 2 a phenolic donor + H2O2 = 2 a phenolic radical donor + 2 H2O. In terms of biological role, removal of H(2)O(2), oxidation of toxic reductants, biosynthesis and degradation of lignin, suberization, auxin catabolism, response to environmental stresses such as wounding, pathogen attack and oxidative stress. These functions might be dependent on each isozyme/isoform in each plant tissue. This is Peroxidase 71 (PER71) from Arabidopsis thaliana (Mouse-ear cress).